We begin with the raw amino-acid sequence, 238 residues long: Zinc finger protein ZAT6 (238 aa).

Residues Met1–Met15 show a composition bias toward polar residues. The disordered stretch occupies residues Met1–Asp42. A Nuclear localization signal motif is present at residues Lys30–Arg38. C2H2-type zinc fingers lie at residues Tyr89–His111 and His148–His170. Residues Asn175–Phe202 form a disordered region. Residues Ser180–Ser193 are compositionally biased toward low complexity.

Its subcellular location is the nucleus. Functionally, probable transcription factor that regulates root development and phosphate (Pi) acquisition and homeostasis. Probably acts as a repressor of primary root growth and regulates Pi homeostasis through the control of root architecture. In Arabidopsis thaliana (Mouse-ear cress), this protein is Zinc finger protein ZAT6 (ZAT6).